The chain runs to 502 residues: Cytochrome P450 monooxygenase AacuE (502 aa).

Residues Ala-4–Pro-26 form a helical membrane-spanning segment. Asn-393 carries an N-linked (GlcNAc...) asparagine glycan. Cys-439 contributes to the heme binding site.

It belongs to the cytochrome P450 family. Heme is required as a cofactor.

It localises to the membrane. The protein operates within secondary metabolite biosynthesis. Functionally, cytochrome P450 monooxygenase; part of the gene cluster that mediates the biosynthesis of the tetrahydroxanthone dimer secalonic acid D. The pathway begins with the synthesis of atrochrysone thioester by the polyketide synthase AacuL. The atrochrysone carboxyl ACP thioesterase AacuM then breaks the thioester bond and releases the atrochrysone carboxylic acid from AacuL. Atrochrysone carboxylic acid is decarboxylated by the decarboxylase AacuI, and oxidized by the anthrone oxygenase AacuG to yield emodin. Emodin is then reduced to emodin hydroquinone by a yet unidentified oxidoreductase. A-ring reduction by the short chain dehydrogenase AacuN, dehydration by the scytalone dehydratase-like protein AacuK and probable spontaneous re-oxidation, results in overall deoxygenation to chrysophanol. Baeyer-Villiger oxidation by the Baeyer-Villiger monooxygenase (BVMO) AacuH then yields monodictyphenone. Monodictyphenone is transformed into compounds with the tetrahydroxanthone skeleton via methylesterification by the methyltransferase AacuQ, followed by the action of the flavin-dependent monooxygenase AacuC, the isomerase AacuP, and the short chain dehydrogenase/reductase AacuF or AacuD. AacuF and AacuD should accept the same compound as a substrate but perform the ketoreduction with a different stereoselectivity, thus yielding blennolides B and A, respectively. In the final step of the biosynthesis, the cytochrome P450 monooxygenase AacuE accepts blennolide B and/or blennolide A to conduct the dimerization reaction to furnish the tetrahydroxanthone dimers, secalonic acids D, B, and F. The polypeptide is Cytochrome P450 monooxygenase AacuE (Aspergillus aculeatus (strain ATCC 16872 / CBS 172.66 / WB 5094)).